We begin with the raw amino-acid sequence, 225 residues long: Probable septum site-determining protein MinC (225 aa).

A disordered region spans residues 87–112; that stretch reads PTHMASPQGNSSKTRSSDTQPKPKTP. Residues 91 to 108 show a composition bias toward polar residues; the sequence is ASPQGNSSKTRSSDTQPK.

Belongs to the MinC family. As to quaternary structure, interacts with MinD and FtsZ.

Its function is as follows. Cell division inhibitor that blocks the formation of polar Z ring septums. Rapidly oscillates between the poles of the cell to destabilize FtsZ filaments that have formed before they mature into polar Z rings. Prevents FtsZ polymerization. This Prochlorococcus marinus (strain MIT 9313) protein is Probable septum site-determining protein MinC.